We begin with the raw amino-acid sequence, 147 residues long: Myoglobin (147 aa).

Position 2 is an N-acetylalanine (alanine 2). Residues 2 to 141 (ADFDAVLKCW…IIADLEANYK (140 aa)) form the Globin domain. Histidine 60 serves as a coordination point for nitrite. An O2-binding site is contributed by histidine 60. Position 89 (histidine 89) interacts with heme b.

This sequence belongs to the globin family. Monomeric.

It localises to the cytoplasm. Its subcellular location is the sarcoplasm. The catalysed reaction is Fe(III)-heme b-[protein] + nitric oxide + H2O = Fe(II)-heme b-[protein] + nitrite + 2 H(+). The enzyme catalyses H2O2 + AH2 = A + 2 H2O. Monomeric heme protein which primary function is to store oxygen and facilitate its diffusion within muscle tissues. Reversibly binds oxygen through a pentacoordinated heme iron and enables its timely and efficient release as needed during periods of heightened demand. Depending on the oxidative conditions of tissues and cells, and in addition to its ability to bind oxygen, it also has a nitrite reductase activity whereby it regulates the production of bioactive nitric oxide. Under stress conditions, like hypoxia and anoxia, it also protects cells against reactive oxygen species thanks to its pseudoperoxidase activity. The chain is Myoglobin (mb) from Thunnus albacares (Yellowfin tuna).